Here is a 137-residue protein sequence, read N- to C-terminus: Large ribosomal subunit protein uL16 (137 aa).

This sequence belongs to the universal ribosomal protein uL16 family. As to quaternary structure, part of the 50S ribosomal subunit.

Binds 23S rRNA and is also seen to make contacts with the A and possibly P site tRNAs. This Pseudomonas entomophila (strain L48) protein is Large ribosomal subunit protein uL16.